The chain runs to 361 residues: Peptide chain release factor 1 (361 aa).

Residue Gln236 is modified to N5-methylglutamine. The segment at 286 to 306 is disordered; the sequence is AADSQRAEARKGQVGSGDRSE.

This sequence belongs to the prokaryotic/mitochondrial release factor family. Post-translationally, methylated by PrmC. Methylation increases the termination efficiency of RF1.

It localises to the cytoplasm. Peptide chain release factor 1 directs the termination of translation in response to the peptide chain termination codons UAG and UAA. The protein is Peptide chain release factor 1 of Magnetococcus marinus (strain ATCC BAA-1437 / JCM 17883 / MC-1).